We begin with the raw amino-acid sequence, 474 residues long: Glutamate--tRNA ligase (474 aa).

Positions 9 to 19 (PSPTGYLHVGG) match the 'HIGH' region motif. Positions 240-244 (KLSKR) match the 'KMSKS' region motif. K243 lines the ATP pocket.

Belongs to the class-I aminoacyl-tRNA synthetase family. Glutamate--tRNA ligase type 1 subfamily. Monomer.

It localises to the cytoplasm. It catalyses the reaction tRNA(Glu) + L-glutamate + ATP = L-glutamyl-tRNA(Glu) + AMP + diphosphate. In terms of biological role, catalyzes the attachment of glutamate to tRNA(Glu) in a two-step reaction: glutamate is first activated by ATP to form Glu-AMP and then transferred to the acceptor end of tRNA(Glu). The polypeptide is Glutamate--tRNA ligase (Vibrio parahaemolyticus serotype O3:K6 (strain RIMD 2210633)).